Consider the following 219-residue polypeptide: tRNA (guanine-N(7)-)-methyltransferase (219 aa).

Residues glutamate 44, aspartate 69, glutamate 102, and asparagine 125 each coordinate S-adenosyl-L-methionine. 2 residues coordinate substrate: lysine 129 and aspartate 161.

It belongs to the class I-like SAM-binding methyltransferase superfamily. TrmB family.

The catalysed reaction is guanosine(46) in tRNA + S-adenosyl-L-methionine = N(7)-methylguanosine(46) in tRNA + S-adenosyl-L-homocysteine. It participates in tRNA modification; N(7)-methylguanine-tRNA biosynthesis. Catalyzes the formation of N(7)-methylguanine at position 46 (m7G46) in tRNA. In Clostridium perfringens (strain SM101 / Type A), this protein is tRNA (guanine-N(7)-)-methyltransferase.